The following is a 315-amino-acid chain: BTB/POZ domain-containing adapter for CUL3-mediated RhoA degradation protein 3 (315 aa).

The residue at position 1 (Met-1) is an N-acetylmethionine. At Ser-23 the chain carries Phosphoserine. The BTB domain occupies 32 to 100; that stretch reads KYVKLNVGGA…LRDGGVPLPE (69 aa). Residues 239–245 carry the PCNA-binding motif; that stretch reads QTKVEFP. Residues 269–294 form a disordered region; sequence NALLEATGGAAGRSHHLDEDEERERE.

It belongs to the BACURD family. Homotetramer; forms a two-fold symmetric tetramer in solution. Interacts with CUL3; interaction is direct and forms a 5:5 heterodecamer. Component of the BCR(BACURD3) E3 ubiquitin ligase complex, at least composed of CUL3, KCTD10/BACURD3 and RBX1. Interacts with DNA polymerase delta subunit 2/POLD2. Interacts with PCNA. Associated with the tectonic-like complex (also named B9 complex); however as Kctd10 has not been identified in all tectonic-like complexes purifications it is unclear whether it is really part of the complex.

It localises to the nucleus. It functions in the pathway protein modification; protein ubiquitination. Substrate-specific adapter of a BCR (BTB-CUL3-RBX1) E3 ubiquitin-protein ligase complex. The BCR(BACURD3) E3 ubiquitin ligase complex mediates the ubiquitination of target proteins, leading to their degradation by the proteasome. The chain is BTB/POZ domain-containing adapter for CUL3-mediated RhoA degradation protein 3 (Kctd10) from Mus musculus (Mouse).